Here is a 23-residue protein sequence, read N- to C-terminus: Apolipophorin-3 (23 aa).

The protein belongs to the insect apolipophorin-3 family. Equilibrium between a soluble monomer and a bound lipoprotein form. Apolipophorin-3 associates with lipophorin during lipid loading until each particle contains 9 or 14 molecules of apolipophorin-3. Hemolymph.

It localises to the secreted. Functionally, assists in the loading of diacylglycerol, generated from triacylglycerol stores in the fat body through the action of adipokinetic hormone, into lipophorin, the hemolymph lipoprotein. It increases the lipid carrying capacity of lipophorin by covering the expanding hydrophobic surface resulting from diacylglycerol uptake. It thus plays a critical role in the transport of lipids during flight in several species of insects. The polypeptide is Apolipophorin-3 (Melanoplus sanguinipes (Migratory grasshopper)).